A 498-amino-acid polypeptide reads, in one-letter code: Probable malate:quinone oxidoreductase 2 (498 aa).

It belongs to the MQO family. FAD serves as cofactor.

It catalyses the reaction (S)-malate + a quinone = a quinol + oxaloacetate. It participates in carbohydrate metabolism; tricarboxylic acid cycle; oxaloacetate from (S)-malate (quinone route): step 1/1. In Staphylococcus epidermidis (strain ATCC 12228 / FDA PCI 1200), this protein is Probable malate:quinone oxidoreductase 2.